We begin with the raw amino-acid sequence, 154 residues long: Myoglobin (154 aa).

In terms of domain architecture, Globin spans 2–148 (GLSDGEWHLV…FRNDIAAKIK (147 aa)). Residue S4 is modified to Phosphoserine. Residue H65 coordinates nitrite. H65 lines the O2 pocket. T68 bears the Phosphothreonine mark. Heme b is bound at residue H94.

The protein belongs to the globin family. As to quaternary structure, monomeric.

Its subcellular location is the cytoplasm. The protein localises to the sarcoplasm. It catalyses the reaction Fe(III)-heme b-[protein] + nitric oxide + H2O = Fe(II)-heme b-[protein] + nitrite + 2 H(+). The enzyme catalyses H2O2 + AH2 = A + 2 H2O. Functionally, monomeric heme protein which primary function is to store oxygen and facilitate its diffusion within muscle tissues. Reversibly binds oxygen through a pentacoordinated heme iron and enables its timely and efficient release as needed during periods of heightened demand. Depending on the oxidative conditions of tissues and cells, and in addition to its ability to bind oxygen, it also has a nitrite reductase activity whereby it regulates the production of bioactive nitric oxide. Under stress conditions, like hypoxia and anoxia, it also protects cells against reactive oxygen species thanks to its pseudoperoxidase activity. This Pusa sibirica (Baikal seal) protein is Myoglobin (MB).